A 301-amino-acid polypeptide reads, in one-letter code: Ribonuclease Z (301 aa).

7 residues coordinate Zn(2+): histidine 63, histidine 65, aspartate 67, histidine 68, histidine 141, aspartate 204, and histidine 262. Aspartate 67 serves as the catalytic Proton acceptor.

It belongs to the RNase Z family. As to quaternary structure, homodimer. The cofactor is Zn(2+).

The catalysed reaction is Endonucleolytic cleavage of RNA, removing extra 3' nucleotides from tRNA precursor, generating 3' termini of tRNAs. A 3'-hydroxy group is left at the tRNA terminus and a 5'-phosphoryl group is left at the trailer molecule.. Functionally, zinc phosphodiesterase, which displays some tRNA 3'-processing endonuclease activity. Probably involved in tRNA maturation, by removing a 3'-trailer from precursor tRNA. The chain is Ribonuclease Z from Streptomyces avermitilis (strain ATCC 31267 / DSM 46492 / JCM 5070 / NBRC 14893 / NCIMB 12804 / NRRL 8165 / MA-4680).